The sequence spans 723 residues: Fatty acid oxidation complex subunit alpha (723 aa).

The enoyl-CoA hydratase/isomerase stretch occupies residues 1 to 189 (MIYQAETLQV…KIGLLDAVVD (189 aa)). Asp296 lines the substrate pocket. Positions 311–723 (NKETQRAAVL…FYGAQQQGSI (413 aa)) are 3-hydroxyacyl-CoA dehydrogenase. NAD(+) contacts are provided by residues Met325, Asp344, 401-403 (VVE), Lys408, and Ser430. Residue His451 is the For 3-hydroxyacyl-CoA dehydrogenase activity of the active site. Residue Asn454 participates in NAD(+) binding. Residues Asn501 and Tyr661 each contribute to the substrate site.

This sequence in the N-terminal section; belongs to the enoyl-CoA hydratase/isomerase family. In the C-terminal section; belongs to the 3-hydroxyacyl-CoA dehydrogenase family. Heterotetramer of two alpha chains (FadB) and two beta chains (FadA).

It catalyses the reaction a (3S)-3-hydroxyacyl-CoA + NAD(+) = a 3-oxoacyl-CoA + NADH + H(+). The enzyme catalyses a (3S)-3-hydroxyacyl-CoA = a (2E)-enoyl-CoA + H2O. It carries out the reaction a 4-saturated-(3S)-3-hydroxyacyl-CoA = a (3E)-enoyl-CoA + H2O. The catalysed reaction is (3S)-3-hydroxybutanoyl-CoA = (3R)-3-hydroxybutanoyl-CoA. It catalyses the reaction a (3Z)-enoyl-CoA = a 4-saturated (2E)-enoyl-CoA. The enzyme catalyses a (3E)-enoyl-CoA = a 4-saturated (2E)-enoyl-CoA. Its pathway is lipid metabolism; fatty acid beta-oxidation. Functionally, involved in the aerobic and anaerobic degradation of long-chain fatty acids via beta-oxidation cycle. Catalyzes the formation of 3-oxoacyl-CoA from enoyl-CoA via L-3-hydroxyacyl-CoA. It can also use D-3-hydroxyacyl-CoA and cis-3-enoyl-CoA as substrate. The protein is Fatty acid oxidation complex subunit alpha of Vibrio vulnificus (strain CMCP6).